A 507-amino-acid polypeptide reads, in one-letter code: Tryptamine 4-monooxygenase (507 aa).

The N-terminal stretch at 1-19 (MIVLLVSLVLAGCIYYANA) is a signal peptide. The disordered stretch occupies residues 403–425 (PNPSEFRPERYLSSDGKPDPTVR). Over residues 408 to 425 (FRPERYLSSDGKPDPTVR) the composition is skewed to basic and acidic residues. A heme-binding site is contributed by cysteine 439.

It belongs to the cytochrome P450 family. Heme is required as a cofactor.

The enzyme catalyses tryptamine + AH2 + O2 = 4-hydroxytryptamine + A + H2O. It participates in secondary metabolite biosynthesis. In terms of biological role, tryptamine 4-monooxygenase; part of the gene cluster that mediates the biosynthesis of psilocybin, a psychotropic tryptamine-derived natural product. The first step in the pathway is the decarboxylation of L-tryptophan to tryptamine by the decarboxylase psiD. PsiD does not decarboxylate phenylalanine, tyrosine, or 5-hydroxy- L -tryptophan (5-HTP). 4-hydroxy-L-tryptophan is accepted as substrate by psiD as well. The cytochrome P450 monooxygenase psiH then converts tryptamine to 4-hydroxytryptamine. The kinase psiK catalyzes the 4-O-phosphorylation step by converting 4-hydroxytryptamine into norbaeocystin. The methyltransferase psiM then catalyzes iterative methyl transfer to the amino group of norbaeocystin to yield psilocybin via a monomethylated intermediate, baeocystin. The polypeptide is Tryptamine 4-monooxygenase (Psilocybe cyanescens).